The sequence spans 597 residues: Medium/long-chain-fatty-acid--CoA ligase FadD6 (597 aa).

It belongs to the ATP-dependent AMP-binding enzyme family.

The enzyme catalyses a medium-chain fatty acid + ATP + CoA = a medium-chain fatty acyl-CoA + AMP + diphosphate. It carries out the reaction a long-chain fatty acid + ATP + CoA = a long-chain fatty acyl-CoA + AMP + diphosphate. The catalysed reaction is hexanoate + ATP + CoA = hexanoyl-CoA + AMP + diphosphate. It catalyses the reaction octanoate + ATP + CoA = octanoyl-CoA + AMP + diphosphate. The enzyme catalyses decanoate + ATP + CoA = decanoyl-CoA + AMP + diphosphate. It carries out the reaction dodecanoate + ATP + CoA = dodecanoyl-CoA + AMP + diphosphate. The catalysed reaction is tetradecanoate + ATP + CoA = tetradecanoyl-CoA + AMP + diphosphate. It catalyses the reaction hexadecanoate + ATP + CoA = hexadecanoyl-CoA + AMP + diphosphate. The enzyme catalyses octadecanoate + ATP + CoA = octadecanoyl-CoA + AMP + diphosphate. It carries out the reaction 9-decenoate + ATP + CoA = 9-decenoyl-CoA + AMP + diphosphate. The catalysed reaction is (9Z)-octadecenoate + ATP + CoA = (9Z)-octadecenoyl-CoA + AMP + diphosphate. It catalyses the reaction 2-hydroxyhexadecanoate + ATP + CoA = 2-hydroxyhexadecanoyl-CoA + AMP + diphosphate. The enzyme catalyses 3-hydroxytetradecanoate + ATP + CoA = 3-hydroxytetradecanoyl-CoA + AMP + diphosphate. It carries out the reaction 12-hydroxyoctadecanoate + ATP + CoA = 12-hydroxyoctadecanoyl-CoA + AMP + diphosphate. The catalysed reaction is 15-hydroxypentadecanoate + ATP + CoA = 15-hydroxypentadecanoyl-CoA + AMP + diphosphate. It catalyses the reaction 16-hydroxyhexadecanoate + ATP + CoA = 16-hydroxyhexadecanoyl-CoA + AMP + diphosphate. The enzyme catalyses 2-methylhexadecanoate + ATP + CoA = 2-methylhexadecanoyl-CoA + AMP + diphosphate. It carries out the reaction 3-methylundecanoate + ATP + CoA = 3-methylundecanoyl-CoA + AMP + diphosphate. The catalysed reaction is 12-methyltridecanoate + ATP + CoA = 12-methyltridecanoyl-CoA + AMP + diphosphate. It catalyses the reaction 12-methyloctadecanoate + ATP + CoA = 12-methyloctadecanoyl-CoA + AMP + diphosphate. In terms of biological role, catalyzes the activation of medium/long-chain fatty acids as acyl-coenzyme A (acyl-CoA). May play a role in the uptake of fatty acids by trapping them metabolically as CoA esters. May also play an important role in the channeling of fatty acids into triacylglycerol (TAG) for use by Mycobacterium during its dormancy. In Mycobacterium tuberculosis (strain ATCC 25618 / H37Rv), this protein is Medium/long-chain-fatty-acid--CoA ligase FadD6.